A 119-amino-acid chain; its full sequence is MANSKRTLFLKRRLRVRNKLRKVNAGRLRLSVHRSNKNISAQLIDDVRGVTLAAASTMEKDLGVVGKNNVEAAKKVGAAIAERAKKAGVEEAYFDRGGFLFHGKVKALADAAREGGLKI.

This sequence belongs to the universal ribosomal protein uL18 family. In terms of assembly, part of the 50S ribosomal subunit; part of the 5S rRNA/L5/L18/L25 subcomplex. Contacts the 5S and 23S rRNAs.

This is one of the proteins that bind and probably mediate the attachment of the 5S RNA into the large ribosomal subunit, where it forms part of the central protuberance. This chain is Large ribosomal subunit protein uL18, found in Ruegeria pomeroyi (strain ATCC 700808 / DSM 15171 / DSS-3) (Silicibacter pomeroyi).